The chain runs to 97 residues: Acylphosphatase (97 aa).

The Acylphosphatase-like domain maps to 5 to 92 (RAHVWISGRV…GEFVRFEITF (88 aa)). Residues R20 and N38 contribute to the active site.

Belongs to the acylphosphatase family.

The catalysed reaction is an acyl phosphate + H2O = a carboxylate + phosphate + H(+). This Syntrophobacter fumaroxidans (strain DSM 10017 / MPOB) protein is Acylphosphatase (acyP).